Reading from the N-terminus, the 160-residue chain is Thialysine N-epsilon-acetyltransferase (160 aa).

Positions 4–159 (FEIVTVTPDH…DGAAINKFAD (156 aa)) constitute an N-acetyltransferase domain. Residues 84–86 (LYI), 92–97 (RMGLAR), 123–126 (NKNA), and 130–133 (YDTV) each bind acetyl-CoA.

Belongs to the acetyltransferase family. As to quaternary structure, homodimer.

It carries out the reaction S-(2-aminoethyl)-L-cysteine + acetyl-CoA = S-(2-acetamidoethyl)-L-cysteine + CoA + H(+). The enzyme catalyses O-(2-aminoethyl)-L-serine + acetyl-CoA = O-(2-acetamidoethyl)-L-serine + CoA + H(+). The catalysed reaction is S-(2-aminoethyl)-homocysteine + acetyl-CoA = S-(2-acetamidoethyl)-homocysteine + CoA + H(+). Functionally, catalyzes the N-acetylation of the amino acid thialysine (S-(2-aminoethyl)-L-cysteine), a L-lysine analog with the 4-methylene group substituted with a sulfur. Substrate specificity: thialysine &gt; O-(2-aminoethyl)-L-serine &gt; S-(2-aminoethyl)-D,L-homocysteine. Does not act on polyamines, such as spermidine and spermine, nor on diamines putrescine and cadaverine. This Caenorhabditis elegans protein is Thialysine N-epsilon-acetyltransferase.